Here is a 142-residue protein sequence, read N- to C-terminus: Large ribosomal subunit protein uL11 (142 aa).

As to quaternary structure, part of the ribosomal stalk of the 50S ribosomal subunit. Interacts with L10 and the large rRNA to form the base of the stalk. L10 forms an elongated spine to which L12 dimers bind in a sequential fashion forming a multimeric L10(L12)X complex. Post-translationally, lys-40 is trimethylated or acetylated; other modifications may also exist.

Its function is as follows. Forms part of the ribosomal stalk which helps the ribosome interact with GTP-bound translation factors. In Rhodopseudomonas palustris (strain ATCC BAA-98 / CGA009), this protein is Large ribosomal subunit protein uL11.